The primary structure comprises 202 residues: MADEYLVPLDQYLAAGVHIGTQQKTKDMKKFIYRVRQDGLYVLDVRKTDERLKVAGKFLAKFEPQSILAVSVRLYGQKPVKKFGEVTGARAIPGRFLPGTMTNPAVKNFFEPDVLIVTDPRADHQAMREAVEIGIPIVALVDTENLLSYVDLAIPTNNKGRKALALIYWILAREILYNRGEIQSREDFKIPVEEFEMKIVRR.

The protein belongs to the universal ribosomal protein uS2 family. Part of the 30S ribosomal subunit.

This Pyrococcus furiosus (strain ATCC 43587 / DSM 3638 / JCM 8422 / Vc1) protein is Small ribosomal subunit protein uS2.